Reading from the N-terminus, the 129-residue chain is Small ribosomal subunit protein uS11 (129 aa).

This sequence belongs to the universal ribosomal protein uS11 family. In terms of assembly, part of the 30S ribosomal subunit. Interacts with proteins S7 and S18. Binds to IF-3.

Functionally, located on the platform of the 30S subunit, it bridges several disparate RNA helices of the 16S rRNA. Forms part of the Shine-Dalgarno cleft in the 70S ribosome. This Rhodopseudomonas palustris (strain HaA2) protein is Small ribosomal subunit protein uS11.